The following is an 85-amino-acid chain: Small ribosomal subunit protein bS16 (85 aa).

It belongs to the bacterial ribosomal protein bS16 family.

The protein is Small ribosomal subunit protein bS16 of Rubrobacter xylanophilus (strain DSM 9941 / JCM 11954 / NBRC 16129 / PRD-1).